The sequence spans 181 residues: Protein Syd (181 aa).

This sequence belongs to the Syd family.

It localises to the cell inner membrane. Functionally, interacts with the SecY protein in vivo. May bind preferentially to an uncomplexed state of SecY, thus functioning either as a chelating agent for excess SecY in the cell or as a regulatory factor that negatively controls the translocase function. This is Protein Syd from Klebsiella pneumoniae (strain 342).